Reading from the N-terminus, the 333-residue chain is B3 domain-containing transcription factor NGA4 (333 aa).

The segment at residues 36-145 is a DNA-binding region (TF-B3); sequence FDKVLTPSDV…KIMFIDWRPR (110 aa). Positions 268–333 are disordered; the sequence is VEESSSSGDT…YKRKGKSLEL (66 aa). The segment covering 323 to 333 has biased composition (basic and acidic residues); it reads EYKRKGKSLEL.

Its subcellular location is the nucleus. Its function is as follows. Regulates lateral organ growth. Functionally redundant with NGA1, NGA2 and NGA3. This is B3 domain-containing transcription factor NGA4 (NGA4) from Arabidopsis thaliana (Mouse-ear cress).